The primary structure comprises 406 residues: Riboflavin biosynthesis protein RibBA (406 aa).

A DHBP synthase region spans residues 1-209 (MSEREEFKFN…IADLIKYRLR (209 aa)). D-ribulose 5-phosphate is bound by residues 33–34 (RE), Asp38, 148–152 (RAGHT), and Glu172. Glu34 is a Mg(2+) binding site. Residue His151 participates in Mg(2+) binding. Residues 210–406 (RETLVEKVAS…VKKDKLGHMF (197 aa)) form a GTP cyclohydrolase II region. A GTP-binding site is contributed by 260–264 (RVHSE). Residues Cys265, Cys276, and Cys278 each coordinate Zn(2+). GTP-binding positions include Gln281, 304 to 306 (EGR), and Thr326. Asp338 functions as the Proton acceptor; for GTP cyclohydrolase activity in the catalytic mechanism. Arg340 functions as the Nucleophile; for GTP cyclohydrolase activity in the catalytic mechanism. Positions 361 and 366 each coordinate GTP.

In the N-terminal section; belongs to the DHBP synthase family. The protein in the C-terminal section; belongs to the GTP cyclohydrolase II family. The cofactor is Mg(2+). Requires Mn(2+) as cofactor. Zn(2+) is required as a cofactor.

It carries out the reaction D-ribulose 5-phosphate = (2S)-2-hydroxy-3-oxobutyl phosphate + formate + H(+). It catalyses the reaction GTP + 4 H2O = 2,5-diamino-6-hydroxy-4-(5-phosphoribosylamino)-pyrimidine + formate + 2 phosphate + 3 H(+). It functions in the pathway cofactor biosynthesis; riboflavin biosynthesis; 2-hydroxy-3-oxobutyl phosphate from D-ribulose 5-phosphate: step 1/1. It participates in cofactor biosynthesis; riboflavin biosynthesis; 5-amino-6-(D-ribitylamino)uracil from GTP: step 1/4. Its function is as follows. Catalyzes the conversion of D-ribulose 5-phosphate to formate and 3,4-dihydroxy-2-butanone 4-phosphate. Catalyzes the conversion of GTP to 2,5-diamino-6-ribosylamino-4(3H)-pyrimidinone 5'-phosphate (DARP), formate and pyrophosphate. The chain is Riboflavin biosynthesis protein RibBA from Aquifex aeolicus (strain VF5).